We begin with the raw amino-acid sequence, 443 residues long: 23S rRNA (uracil(1939)-C(5))-methyltransferase RlmD (443 aa).

In terms of domain architecture, TRAM spans serine 12–asparagine 70. [4Fe-4S] cluster is bound by residues cysteine 83, cysteine 89, cysteine 92, and cysteine 171. S-adenosyl-L-methionine is bound by residues glutamine 277, phenylalanine 306, asparagine 311, glutamate 327, aspartate 354, and aspartate 374. Residue cysteine 400 is the Nucleophile of the active site.

The protein belongs to the class I-like SAM-binding methyltransferase superfamily. RNA M5U methyltransferase family. RlmD subfamily.

The catalysed reaction is uridine(1939) in 23S rRNA + S-adenosyl-L-methionine = 5-methyluridine(1939) in 23S rRNA + S-adenosyl-L-homocysteine + H(+). In terms of biological role, catalyzes the formation of 5-methyl-uridine at position 1939 (m5U1939) in 23S rRNA. This is 23S rRNA (uracil(1939)-C(5))-methyltransferase RlmD from Shewanella woodyi (strain ATCC 51908 / MS32).